The following is a 66-amino-acid chain: Large ribosomal subunit protein bL33c (66 aa).

This sequence belongs to the bacterial ribosomal protein bL33 family.

The protein localises to the plastid. The protein resides in the chloroplast. The sequence is that of Large ribosomal subunit protein bL33c from Chloranthus spicatus (Chulantree).